The sequence spans 285 residues: MKIQTKATGVLERTSHYLKAGILREKPAWFNVVGSHPPMMDLTKKPKKFDTQAQENDPSRSLFQKKKGGDLFKTRSNIYDRQQRHNSISRVPKLEFLEDQLRDVFYHQHPWEFSRPKTLIENEGNESSQCDWSHMLQLYKPLDGESVVQRTLWLLQDSKKTGKTMSLFEAYDQARFEFYRLRMEEEMSSTVSKEESSMYGAIYPSTNLDWGIKKEQEYIDAWTKVAGEKTKVRDANKDGRTANGSMGADDVVESKQSIWETVFDASDVSEASLEENSNAQTKDNA.

It belongs to the mitochondrion-specific ribosomal protein mS23 family. As to quaternary structure, component of the mitochondrial small ribosomal subunit.

Its subcellular location is the mitochondrion. This chain is Small ribosomal subunit protein mS23 (RSM25), found in Debaryomyces hansenii (strain ATCC 36239 / CBS 767 / BCRC 21394 / JCM 1990 / NBRC 0083 / IGC 2968) (Yeast).